The chain runs to 268 residues: Aliphatic sulfonates import ATP-binding protein SsuB 2 (268 aa).

The region spanning 16–230 is the ABC transporter domain; sequence VQLRNVVRQF…DSGQAGFQSI (215 aa). ATP is bound at residue 48–55; that stretch reads GASGSGKT.

This sequence belongs to the ABC transporter superfamily. Aliphatic sulfonates importer (TC 3.A.1.17.2) family. In terms of assembly, the complex is composed of two ATP-binding proteins (SsuB), two transmembrane proteins (SsuC) and a solute-binding protein (SsuA).

Its subcellular location is the cell inner membrane. The catalysed reaction is ATP + H2O + aliphatic sulfonate-[sulfonate-binding protein]Side 1 = ADP + phosphate + aliphatic sulfonateSide 2 + [sulfonate-binding protein]Side 1.. Its function is as follows. Part of the ABC transporter complex SsuABC involved in aliphatic sulfonates import. Responsible for energy coupling to the transport system. The polypeptide is Aliphatic sulfonates import ATP-binding protein SsuB 2 (Pseudomonas savastanoi pv. phaseolicola (strain 1448A / Race 6) (Pseudomonas syringae pv. phaseolicola (strain 1448A / Race 6))).